We begin with the raw amino-acid sequence, 359 residues long: Dihydroorotate dehydrogenase (quinone) (359 aa).

FMN contacts are provided by residues 68–72 (AGFDK) and Ala92. Lys72 contacts substrate. Residue 117–121 (NAYGF) coordinates substrate. Residues Asn146 and Asn179 each coordinate FMN. Substrate is bound at residue Asn179. Ser182 serves as the catalytic Nucleophile. Asn184 is a substrate binding site. Residues Lys215 and Thr243 each contribute to the FMN site. 244 to 245 (NT) lines the substrate pocket. FMN is bound by residues Gly263, Gly292, and 313–314 (YT).

The protein belongs to the dihydroorotate dehydrogenase family. Type 2 subfamily. Monomer. It depends on FMN as a cofactor.

The protein resides in the cell membrane. It catalyses the reaction (S)-dihydroorotate + a quinone = orotate + a quinol. Its pathway is pyrimidine metabolism; UMP biosynthesis via de novo pathway; orotate from (S)-dihydroorotate (quinone route): step 1/1. Functionally, catalyzes the conversion of dihydroorotate to orotate with quinone as electron acceptor. The protein is Dihydroorotate dehydrogenase (quinone) of Nautilia profundicola (strain ATCC BAA-1463 / DSM 18972 / AmH).